Here is a 209-residue protein sequence, read N- to C-terminus: Orotate phosphoribosyltransferase (209 aa).

5-phospho-alpha-D-ribose 1-diphosphate is bound by residues arginine 96, lysine 100, histidine 102, and 122–130 (EDLISTGGS). Serine 126 is a binding site for orotate.

This sequence belongs to the purine/pyrimidine phosphoribosyltransferase family. PyrE subfamily. In terms of assembly, homodimer. Mg(2+) is required as a cofactor.

It catalyses the reaction orotidine 5'-phosphate + diphosphate = orotate + 5-phospho-alpha-D-ribose 1-diphosphate. It participates in pyrimidine metabolism; UMP biosynthesis via de novo pathway; UMP from orotate: step 1/2. Functionally, catalyzes the transfer of a ribosyl phosphate group from 5-phosphoribose 1-diphosphate to orotate, leading to the formation of orotidine monophosphate (OMP). This is Orotate phosphoribosyltransferase from Streptococcus pyogenes serotype M5 (strain Manfredo).